The primary structure comprises 1098 residues: Probable DNA-directed RNA polymerase (1098 aa).

Residues 1–24 are compositionally biased toward basic and acidic residues; it reads PIRESVRVSTDRDPDLEDEKREQL. The disordered stretch occupies residues 1-26; that stretch reads PIRESVRVSTDRDPDLEDEKREQLGE. Residues D663, K750, and D915 contribute to the active site.

It belongs to the phage and mitochondrial RNA polymerase family.

It localises to the mitochondrion. The enzyme catalyses RNA(n) + a ribonucleoside 5'-triphosphate = RNA(n+1) + diphosphate. Functionally, DNA-dependent RNA polymerase catalyzes the transcription of DNA into RNA using the four ribonucleoside triphosphates as substrates. The protein is Probable DNA-directed RNA polymerase of Zea mays (Maize).